We begin with the raw amino-acid sequence, 478 residues long: Monocarboxylate transporter 2 (478 aa).

Residues Met-1–Asp-15 lie on the Cytoplasmic side of the membrane. The helical transmembrane segment at Gly-16–Phe-36 threads the bilayer. Over Pro-37–Ala-59 the chain is Extracellular. A helical membrane pass occupies residues Trp-60–Val-80. The Cytoplasmic segment spans residues Asn-81–Val-89. A helical transmembrane segment spans residues Ile-90–Val-110. The Extracellular segment spans residues Gln-111–Thr-115. The helical transmembrane segment at Met-116–Gly-136 threads the bilayer. Residues Lys-137 to Gly-148 lie on the Cytoplasmic side of the membrane. Residues Leu-149–Phe-169 form a helical membrane-spanning segment. The Extracellular segment spans residues Asn-170–Gly-173. A helical transmembrane segment spans residues Trp-174 to Leu-194. Residues Met-195–Gly-246 are Cytoplasmic-facing. Residues Pro-200–Lys-224 form a disordered region. Residues Phe-247–Phe-267 traverse the membrane as a helical segment. Residues Leu-268–Ala-282 lie on the Extracellular side of the membrane. Residues Ala-283–Ile-303 traverse the membrane as a helical segment. The Cytoplasmic segment spans residues Ala-304–Arg-312. The chain crosses the membrane as a helical span at residues Ile-313–Leu-333. Residues Ala-334 to Thr-338 are Extracellular-facing. The chain crosses the membrane as a helical span at residues Ser-339–Phe-359. Topologically, residues Glu-360 to Ser-373 are cytoplasmic. The helical transmembrane segment at Ala-374 to Gly-394 threads the bilayer. At Lys-395 to Met-406 the chain is on the extracellular side. A helical membrane pass occupies residues Tyr-407 to Ile-427. Residues Asn-428 to Ile-478 lie on the Cytoplasmic side of the membrane. Basic and acidic residues predominate over residues Lys-437 to Asn-461. The segment at Lys-437 to Ile-478 is disordered.

This sequence belongs to the major facilitator superfamily. Monocarboxylate porter (TC 2.A.1.13) family. As to quaternary structure, homodimer. Interacts with GRID2IP. Interacts with EMB; interaction mediates SLC16A7 targeting to the plasma membrane. Interacts with isoform 2 of BSG. As to expression, detected in heart and in blood lymphocytes and monocytes (at protein level). High expression in testis, moderate to low in spleen, heart, kidney, pancreas, skeletal muscle, brain and leukocyte. Restricted expression in normal tissues, but widely expressed in cancer cells.

Its subcellular location is the cell membrane. The protein localises to the basolateral cell membrane. It is found in the cytoplasm. It carries out the reaction pyruvate(out) + H(+)(out) = pyruvate(in) + H(+)(in). The catalysed reaction is 3-methyl-2-oxobutanoate(out) + H(+)(out) = 3-methyl-2-oxobutanoate(in) + H(+)(in). The enzyme catalyses (S)-lactate(in) + H(+)(in) = (S)-lactate(out) + H(+)(out). It catalyses the reaction acetoacetate(out) + H(+)(out) = acetoacetate(in) + H(+)(in). It carries out the reaction (R)-3-hydroxybutanoate(out) + H(+)(out) = (R)-3-hydroxybutanoate(in) + H(+)(in). The catalysed reaction is 4-methyl-2-oxopentanoate(out) + H(+)(out) = 4-methyl-2-oxopentanoate(in) + H(+)(in). The enzyme catalyses (S)-3-hydroxybutanoate(out) + H(+)(out) = (S)-3-hydroxybutanoate(in) + H(+)(in). With respect to regulation, transport activity exhibits steep dependence on substrate concentration. Substrate concentration sensitivity of SLC16A7 arises from the strong inter-subunit cooperativity of the SLC16A7 dimer during transport. Inhibited by AR-C155858. In terms of biological role, proton-coupled monocarboxylate symporter. Catalyzes the rapid transport across the plasma membrane of monocarboxylates such as L-lactate, pyruvate and ketone bodies, acetoacetate, beta-hydroxybutyrate and acetate. Dimerization is functionally required and both subunits work cooperatively in transporting substrate. The protein is Monocarboxylate transporter 2 of Homo sapiens (Human).